Reading from the N-terminus, the 695-residue chain is Elongation factor G 1 (695 aa).

Residues 6–284 enclose the tr-type G domain; it reads SKVRNIGISA…AVETYLPCPT (279 aa). GTP-binding positions include 15-22, 82-86, and 136-139; these read AHIDSGKT, DTPGH, and NKCD.

The protein belongs to the TRAFAC class translation factor GTPase superfamily. Classic translation factor GTPase family. EF-G/EF-2 subfamily.

It localises to the cytoplasm. Functionally, catalyzes the GTP-dependent ribosomal translocation step during translation elongation. During this step, the ribosome changes from the pre-translocational (PRE) to the post-translocational (POST) state as the newly formed A-site-bound peptidyl-tRNA and P-site-bound deacylated tRNA move to the P and E sites, respectively. Catalyzes the coordinated movement of the two tRNA molecules, the mRNA and conformational changes in the ribosome. This Desulfotalea psychrophila (strain LSv54 / DSM 12343) protein is Elongation factor G 1.